A 100-amino-acid polypeptide reads, in one-letter code: Integration host factor subunit alpha (100 aa).

It belongs to the bacterial histone-like protein family. Heterodimer of an alpha and a beta chain.

Functionally, this protein is one of the two subunits of integration host factor, a specific DNA-binding protein that functions in genetic recombination as well as in transcriptional and translational control. In Phenylobacterium zucineum (strain HLK1), this protein is Integration host factor subunit alpha.